The primary structure comprises 426 residues: Serine hydroxymethyltransferase (426 aa).

(6S)-5,6,7,8-tetrahydrofolate contacts are provided by residues Leu-113 and 117-119 (GHL). Position 222 is an N6-(pyridoxal phosphate)lysine (Lys-222). 363-365 (SAF) is a (6S)-5,6,7,8-tetrahydrofolate binding site.

It belongs to the SHMT family. Homodimer. Requires pyridoxal 5'-phosphate as cofactor.

The protein localises to the cytoplasm. The catalysed reaction is (6R)-5,10-methylene-5,6,7,8-tetrahydrofolate + glycine + H2O = (6S)-5,6,7,8-tetrahydrofolate + L-serine. It functions in the pathway one-carbon metabolism; tetrahydrofolate interconversion. It participates in amino-acid biosynthesis; glycine biosynthesis; glycine from L-serine: step 1/1. Its function is as follows. Catalyzes the reversible interconversion of serine and glycine with tetrahydrofolate (THF) serving as the one-carbon carrier. This reaction serves as the major source of one-carbon groups required for the biosynthesis of purines, thymidylate, methionine, and other important biomolecules. Also exhibits THF-independent aldolase activity toward beta-hydroxyamino acids, producing glycine and aldehydes, via a retro-aldol mechanism. The sequence is that of Serine hydroxymethyltransferase from Bacteroides thetaiotaomicron (strain ATCC 29148 / DSM 2079 / JCM 5827 / CCUG 10774 / NCTC 10582 / VPI-5482 / E50).